The primary structure comprises 370 residues: Phosphate-binding protein PstS 3 (370 aa).

Residues 1 to 22 form the signal peptide; the sequence is MKLNRFGAAVGVLAAGALVLSA. Residue Cys-23 is the site of N-palmitoyl cysteine attachment. Residue Cys-23 is the site of S-diacylglycerol cysteine attachment. Phosphate is bound by residues 56–58, Ser-86, Asp-104, and 191–193; these read STA and SGT.

The protein belongs to the PstS family. As to quaternary structure, the complex is composed of two ATP-binding proteins (PstB), two transmembrane proteins (PstC and PstA) and a solute-binding protein (PstS).

The protein localises to the cell membrane. Functionally, part of the ABC transporter complex PstSACB involved in phosphate import. The polypeptide is Phosphate-binding protein PstS 3 (pstS3) (Mycobacterium bovis (strain ATCC BAA-935 / AF2122/97)).